We begin with the raw amino-acid sequence, 221 residues long: Large ribosomal subunit protein uL3 (221 aa).

This sequence belongs to the universal ribosomal protein uL3 family. In terms of assembly, part of the 50S ribosomal subunit. Forms a cluster with proteins L14 and L19.

Functionally, one of the primary rRNA binding proteins, it binds directly near the 3'-end of the 23S rRNA, where it nucleates assembly of the 50S subunit. This chain is Large ribosomal subunit protein uL3, found in Chlamydia trachomatis serovar A (strain ATCC VR-571B / DSM 19440 / HAR-13).